Reading from the N-terminus, the 205-residue chain is Holliday junction branch migration complex subunit RuvA (205 aa).

Positions 1–64 (MIGKLKGTID…EDQLRLFGFL (64 aa)) are domain I. Residues 65 to 143 (SALEREWFRL…AFAGEMSASI (79 aa)) form a domain II region. The flexible linker stretch occupies residues 144 to 153 (GLKQELGEGV). The interval 153–205 (VAAAPVSDAVSALTNLGYSRDQAANAVAAALKNGGEGGDSAKLIRLGLKELAR) is domain III.

This sequence belongs to the RuvA family. In terms of assembly, homotetramer. Forms an RuvA(8)-RuvB(12)-Holliday junction (HJ) complex. HJ DNA is sandwiched between 2 RuvA tetramers; dsDNA enters through RuvA and exits via RuvB. An RuvB hexamer assembles on each DNA strand where it exits the tetramer. Each RuvB hexamer is contacted by two RuvA subunits (via domain III) on 2 adjacent RuvB subunits; this complex drives branch migration. In the full resolvosome a probable DNA-RuvA(4)-RuvB(12)-RuvC(2) complex forms which resolves the HJ.

It is found in the cytoplasm. Its function is as follows. The RuvA-RuvB-RuvC complex processes Holliday junction (HJ) DNA during genetic recombination and DNA repair, while the RuvA-RuvB complex plays an important role in the rescue of blocked DNA replication forks via replication fork reversal (RFR). RuvA specifically binds to HJ cruciform DNA, conferring on it an open structure. The RuvB hexamer acts as an ATP-dependent pump, pulling dsDNA into and through the RuvAB complex. HJ branch migration allows RuvC to scan DNA until it finds its consensus sequence, where it cleaves and resolves the cruciform DNA. The chain is Holliday junction branch migration complex subunit RuvA from Sinorhizobium fredii (strain NBRC 101917 / NGR234).